The following is a 285-amino-acid chain: Acetylglutamate kinase (285 aa).

Residues 64–65, Arg-86, and Asn-180 each bind substrate; that span reads GG.

It belongs to the acetylglutamate kinase family. ArgB subfamily.

Its subcellular location is the plastid. The protein resides in the chloroplast. It catalyses the reaction N-acetyl-L-glutamate + ATP = N-acetyl-L-glutamyl 5-phosphate + ADP. It participates in amino-acid biosynthesis; L-arginine biosynthesis; N(2)-acetyl-L-ornithine from L-glutamate: step 2/4. Functionally, catalyzes the ATP-dependent phosphorylation of N-acetyl-L-glutamate. The sequence is that of Acetylglutamate kinase from Gracilaria tenuistipitata var. liui (Red alga).